The following is an 857-amino-acid chain: DNA mismatch repair protein MutS (857 aa).

Glycine 608–serine 615 lines the ATP pocket.

Belongs to the DNA mismatch repair MutS family.

This protein is involved in the repair of mismatches in DNA. It is possible that it carries out the mismatch recognition step. This protein has a weak ATPase activity. The polypeptide is DNA mismatch repair protein MutS (Lactobacillus johnsonii (strain CNCM I-12250 / La1 / NCC 533)).